A 184-amino-acid polypeptide reads, in one-letter code: Leucine-rich repeat-containing protein 20 (184 aa).

LRR repeat units lie at residues 23–44 (GSDT…IYKV), 51–72 (QIHL…FMTT), 75–96 (QLRE…VSSL), 98–120 (HLRA…TTLP), 121–141 (ALET…EKLA), and 145–167 (ALRV…APPL). At Ser175 the chain carries Phosphoserine.

This Mus musculus (Mouse) protein is Leucine-rich repeat-containing protein 20 (Lrrc20).